Here is a 251-residue protein sequence, read N- to C-terminus: Hydroxyacylglutathione hydrolase (251 aa).

7 residues coordinate Zn(2+): H53, H55, D57, H58, H110, D127, and H165.

Belongs to the metallo-beta-lactamase superfamily. Glyoxalase II family. Monomer. Zn(2+) serves as cofactor.

It catalyses the reaction an S-(2-hydroxyacyl)glutathione + H2O = a 2-hydroxy carboxylate + glutathione + H(+). The protein operates within secondary metabolite metabolism; methylglyoxal degradation; (R)-lactate from methylglyoxal: step 2/2. Thiolesterase that catalyzes the hydrolysis of S-D-lactoyl-glutathione to form glutathione and D-lactic acid. The chain is Hydroxyacylglutathione hydrolase from Salmonella gallinarum (strain 287/91 / NCTC 13346).